The following is a 99-amino-acid chain: RNA-binding protein Hfq (99 aa).

In terms of domain architecture, Sm spans 10 to 71 (DLFLNQLRKE…ISSILPSKPI (62 aa)). The tract at residues 77-99 (VQNSQVQNTASQQSNNNQNQESK) is disordered.

It belongs to the Hfq family. In terms of assembly, homohexamer.

Its function is as follows. RNA chaperone that binds small regulatory RNA (sRNAs) and mRNAs to facilitate mRNA translational regulation in response to envelope stress, environmental stress and changes in metabolite concentrations. Also binds with high specificity to tRNAs. The chain is RNA-binding protein Hfq from Caldicellulosiruptor saccharolyticus (strain ATCC 43494 / DSM 8903 / Tp8T 6331).